A 245-amino-acid polypeptide reads, in one-letter code: Probable phosphatase YPTB2019 (245 aa).

Positions 7, 9, 15, 40, 73, 101, 131, 192, and 194 each coordinate Zn(2+).

This sequence belongs to the PHP family. As to quaternary structure, homotrimer. Zn(2+) serves as cofactor.

This is Probable phosphatase YPTB2019 from Yersinia pseudotuberculosis serotype I (strain IP32953).